Consider the following 557-residue polypeptide: UvrABC system protein C (557 aa).

A GIY-YIG domain is found at 14–89 (EEPGVYIFKN…IKKYRPKYNV (76 aa)). A UVR domain is found at 194–229 (EEVFDYLKEKMETHSRMLDFENAAKYRDLLLNLSNV).

This sequence belongs to the UvrC family. Interacts with UvrB in an incision complex.

The protein resides in the cytoplasm. Its function is as follows. The UvrABC repair system catalyzes the recognition and processing of DNA lesions. UvrC both incises the 5' and 3' sides of the lesion. The N-terminal half is responsible for the 3' incision and the C-terminal half is responsible for the 5' incision. The chain is UvrABC system protein C from Thermotoga petrophila (strain ATCC BAA-488 / DSM 13995 / JCM 10881 / RKU-1).